A 131-amino-acid chain; its full sequence is Profilin-2 (131 aa).

Belongs to the profilin family. As to quaternary structure, occurs in many kinds of cells as a complex with monomeric actin in a 1:1 ratio.

The protein localises to the cytoplasm. The protein resides in the cytoskeleton. In terms of biological role, binds to actin and affects the structure of the cytoskeleton. At high concentrations, profilin prevents the polymerization of actin, whereas it enhances it at low concentrations. By binding to PIP2, it inhibits the formation of IP3 and DG. The polypeptide is Profilin-2 (PRO2) (Parietaria judaica (Pellitory-of-the-wall)).